Consider the following 102-residue polypeptide: Small ribosomal subunit protein uS10 (102 aa).

Belongs to the universal ribosomal protein uS10 family. Part of the 30S ribosomal subunit.

In terms of biological role, involved in the binding of tRNA to the ribosomes. This Syntrophotalea carbinolica (strain DSM 2380 / NBRC 103641 / GraBd1) (Pelobacter carbinolicus) protein is Small ribosomal subunit protein uS10.